Reading from the N-terminus, the 84-residue chain is Esculentin-1B (84 aa).

Positions methionine 1–cysteine 22 are cleaved as a signal peptide. A propeptide spanning residues glutamate 23–arginine 38 is cleaved from the precursor. Cysteine 78 and cysteine 84 form a disulfide bridge.

This sequence belongs to the frog skin active peptide (FSAP) family. Brevinin subfamily. In terms of tissue distribution, expressed by the skin glands.

The protein resides in the secreted. In terms of biological role, shows antibacterial activity against representative Gram-negative and Gram-positive bacterial species, and hemolytic activity. The sequence is that of Esculentin-1B from Pelophylax lessonae (Pool frog).